Here is a 188-residue protein sequence, read N- to C-terminus: Elongation factor P (188 aa).

This sequence belongs to the elongation factor P family.

It is found in the cytoplasm. It functions in the pathway protein biosynthesis; polypeptide chain elongation. Its function is as follows. Involved in peptide bond synthesis. Stimulates efficient translation and peptide-bond synthesis on native or reconstituted 70S ribosomes in vitro. Probably functions indirectly by altering the affinity of the ribosome for aminoacyl-tRNA, thus increasing their reactivity as acceptors for peptidyl transferase. The protein is Elongation factor P of Bacteroides fragilis (strain ATCC 25285 / DSM 2151 / CCUG 4856 / JCM 11019 / LMG 10263 / NCTC 9343 / Onslow / VPI 2553 / EN-2).